Here is a 311-residue protein sequence, read N- to C-terminus: Tyrosine recombinase XerC (311 aa).

The 87-residue stretch at 14–100 (ESLNETAKKF…SLRTFYKVLL (87 aa)) folds into the Core-binding (CB) domain. One can recognise a Tyr recombinase domain in the interval 121–303 (EVPKNFRINE…SKEKIKEVYR (183 aa)). Active-site residues include Arg163, Lys187, His255, Arg258, and His281. The active-site O-(3'-phospho-DNA)-tyrosine intermediate is the Tyr290.

The protein belongs to the 'phage' integrase family. XerC subfamily. As to quaternary structure, forms a cyclic heterotetrameric complex composed of two molecules of XerC and two molecules of XerD.

Its subcellular location is the cytoplasm. Its function is as follows. Site-specific tyrosine recombinase, which acts by catalyzing the cutting and rejoining of the recombining DNA molecules. The XerC-XerD complex is essential to convert dimers of the bacterial chromosome into monomers to permit their segregation at cell division. It also contributes to the segregational stability of plasmids. The sequence is that of Tyrosine recombinase XerC from Leptospira interrogans serogroup Icterohaemorrhagiae serovar copenhageni (strain Fiocruz L1-130).